The chain runs to 126 residues: Probable cystatin-16 (126 aa).

The first 20 residues, 1 to 20 (MFLKATLLLGLAVLGMHVWA), serve as a signal peptide directing secretion. Cysteine 84 and cysteine 94 are oxidised to a cystine. A glycan (N-linked (GlcNAc...) asparagine) is linked at asparagine 106.

The protein belongs to the cystatin family.

Its subcellular location is the secreted. This Bos taurus (Bovine) protein is Probable cystatin-16.